A 304-amino-acid polypeptide reads, in one-letter code: uncharacterized protein (304 aa).

72-79 (GPTGSGKT) lines the ATP pocket.

Belongs to the CbbQ/NirQ/NorQ/GpvN family.

This is an uncharacterized protein from Bacillus subtilis (strain 168).